The chain runs to 258 residues: Redox-sensing transcriptional repressor Rex (258 aa).

Positions 26–65 (LYLRALTALSERSVPTVSSEELAAAAGVNSAKLRKDFSYL) form a DNA-binding region, H-T-H motif. 100–105 (GIGNLG) lines the NAD(+) pocket. Positions 219–258 (AGEEAAADGAAPPVAARKQQRSTGSADQGPDGDVPAVMPA) are disordered. Low complexity predominate over residues 225–234 (ADGAAPPVAA).

The protein belongs to the transcriptional regulatory Rex family. In terms of assembly, homodimer.

It is found in the cytoplasm. Modulates transcription of respiratory genes in response to changes in cellular NADH/NAD(+) redox state. Binds to the DNA sequence motif 5'-TGTGAACGCGTTCACA-3' in the promoter of the cydABCD operon. May play a general role as a sensor of cellular redox balance. The sequence is that of Redox-sensing transcriptional repressor Rex from Streptomyces coelicolor (strain ATCC BAA-471 / A3(2) / M145).